The sequence spans 1244 residues: ATP-dependent RNA helicase DHX8 (1244 aa).

A Glycyl lysine isopeptide (Lys-Gly) (interchain with G-Cter in SUMO2) cross-link involves residue K140. Disordered regions lie at residues 152–289 and 361–396; these read LMPS…PAIG and DVDQ…RPTH. Residues 160-169 are compositionally biased toward basic and acidic residues; the sequence is EKQRDPEHRD. Residues 170 to 179 are compositionally biased toward basic residues; the sequence is RTKKKKRSRS. Positions 180–220 are enriched in basic and acidic residues; the sequence is RDRDRDRDRDRDRDRDRDRDRDKDRERDRDRERDRERDRER. The span at 221 to 234 shows a compositional bias: basic residues; sequence DHKRRHRSRSRSHS. Basic and acidic residues predominate over residues 256–283; sequence FKDRKDREKYGERNLDRWRDKHVDRPPP. Residues 289–360 enclose the S1 motif domain; that stretch reads GDIYNGKVTS…TGTKTSLSMK (72 aa). The span at 386-395 shows a compositional bias: basic and acidic residues; that stretch reads TSMRNPDRPT. S419 bears the Phosphoserine mark. A Glycyl lysine isopeptide (Lys-Gly) (interchain with G-Cter in SUMO2) cross-link involves residue K423. S484 is subject to Phosphoserine. Residues 599–762 enclose the Helicase ATP-binding domain; it reads VQAVHDNQIL…FYEAPIFTIP (164 aa). 612–619 serves as a coordination point for ATP; sequence GETGSGKT. Residues 709-712 carry the DEAH box motif; sequence DEAH. The Helicase C-terminal domain occupies 780–960; it reads YLDASLITVM…STVLSLKAMG (181 aa).

The protein belongs to the DEAD box helicase family. DEAH subfamily. DDX8/PRP22 sub-subfamily. In terms of assembly, identified in the spliceosome C complex. Interacts with ARRB2; the interaction is detected in the nucleus upon OR1D2 stimulation. Interacts with SRRM2. Interacts with CACTIN.

The protein resides in the nucleus. The enzyme catalyses ATP + H2O = ADP + phosphate + H(+). Involved in pre-mRNA splicing as component of the spliceosome. Facilitates nuclear export of spliced mRNA by releasing the RNA from the spliceosome. The sequence is that of ATP-dependent RNA helicase DHX8 (Dhx8) from Mus musculus (Mouse).